Consider the following 146-residue polypeptide: Hemoglobin subunit beta (146 aa).

The Globin domain occupies 2–146 (HWTAEEKQLI…VAHALARKYH (145 aa)). Histidine 63 and histidine 92 together coordinate heme b.

This sequence belongs to the globin family. In terms of assembly, heterotetramer of two alpha chains and two beta chains. As to expression, red blood cells.

Its function is as follows. Involved in oxygen transport from the lung to the various peripheral tissues. The sequence is that of Hemoglobin subunit beta (HBB) from Ara ararauna (Blue-and-yellow macaw).